The chain runs to 344 residues: GDSL esterase/lipase At1g73610 (344 aa).

The first 24 residues, 1–24, serve as a signal peptide directing secretion; the sequence is MNCLMFFKMLLAFSFISLFYVGNA. Residue N30 is glycosylated (N-linked (GlcNAc...) asparagine). The active-site Nucleophile is the S42. Catalysis depends on residues D319 and H322.

It belongs to the 'GDSL' lipolytic enzyme family.

It is found in the secreted. The sequence is that of GDSL esterase/lipase At1g73610 from Arabidopsis thaliana (Mouse-ear cress).